The following is a 148-amino-acid chain: Macrodomain Ter protein (148 aa).

The protein belongs to the MatP family. Homodimer.

It is found in the cytoplasm. In terms of biological role, required for spatial organization of the terminus region of the chromosome (Ter macrodomain) during the cell cycle. Prevents early segregation of duplicated Ter macrodomains during cell division. Binds specifically to matS, which is a 13 bp signature motif repeated within the Ter macrodomain. This is Macrodomain Ter protein from Haemophilus influenzae (strain PittGG).